Consider the following 347-residue polypeptide: NADH-ubiquinone oxidoreductase chain 2 (347 aa).

Transmembrane regions (helical) follow at residues 3–23, 25–45, 67–87, 96–116, 122–142, 145–165, 178–198, 200–220, 239–259, 274–294, and 325–345; these read PIIFIIILLTIMLGTIIVMIS, HWLLVWIGFEMNMLAIIPIMM, SMLLMMAVIINLMFSGQWTVM, MLMTMALAMKLGMAPFHFWVP, IPLSSGLILLTWQKLAPMSVL, IFPSINLNLILTLSVLSILIG, IMAYSSIAHMGWMTAVLPYNP, MTLLNLIIYIIMTSTMFTMFM, IMTVLILATLLSMGGLPPLSG, NSIILPTFMAITALLNLYFYM, and FLPTMVVLSTMMLPLTPMLSV.

Belongs to the complex I subunit 2 family. As to quaternary structure, core subunit of respiratory chain NADH dehydrogenase (Complex I) which is composed of 45 different subunits. Interacts with TMEM242.

The protein localises to the mitochondrion inner membrane. The catalysed reaction is a ubiquinone + NADH + 5 H(+)(in) = a ubiquinol + NAD(+) + 4 H(+)(out). Core subunit of the mitochondrial membrane respiratory chain NADH dehydrogenase (Complex I) which catalyzes electron transfer from NADH through the respiratory chain, using ubiquinone as an electron acceptor. Essential for the catalytic activity and assembly of complex I. The sequence is that of NADH-ubiquinone oxidoreductase chain 2 from Bos indicus (Zebu).